Reading from the N-terminus, the 238-residue chain is Small ribosomal subunit protein uS2c (238 aa).

It belongs to the universal ribosomal protein uS2 family.

The protein resides in the plastid. Its subcellular location is the chloroplast. In Jasminum nudiflorum (Winter jasmine), this protein is Small ribosomal subunit protein uS2c (rps2).